The following is a 624-amino-acid chain: Low affinity potassium transport system protein Kup (624 aa).

12 helical membrane-spanning segments follow: residues 9 to 29, 49 to 69, 103 to 123, 137 to 157, 165 to 185, 213 to 233, 247 to 267, 276 to 296, 337 to 357, 365 to 385, 398 to 418, and 421 to 441; these read LPAI…TSPL, VFGF…IKYL, VIMG…TPAI, PQLD…LFMI, VGKL…GLGL, VSFI…ALYA, WFTV…ALLL, PFFL…AALA, IYIP…IVIV, LAAA…ILST, FVAL…TANL, and LLSG…VMTT.

Belongs to the HAK/KUP transporter (TC 2.A.72) family.

It is found in the cell inner membrane. The catalysed reaction is K(+)(in) + H(+)(in) = K(+)(out) + H(+)(out). In terms of biological role, responsible for the low-affinity transport of potassium into the cell. Likely operates as a K(+):H(+) symporter. The polypeptide is Low affinity potassium transport system protein Kup (Shigella dysenteriae serotype 1 (strain Sd197)).